The chain runs to 341 residues: O(6)-methylguanine-induced apoptosis 2 (341 aa).

A compositionally biased stretch (polar residues) spans 1–10 (MSQKFANTGS). The segment at 1 to 23 (MSQKFANTGSFIEREDLGKPNKG) is disordered. Residues 12 to 23 (IEREDLGKPNKG) show a composition bias toward basic and acidic residues. STPGR repeat units follow at residues 73 to 80 (PGPGFYNV), 115 to 123 (PAANAYTIR), 154 to 160 (PAPNHYN), 194 to 213 (GPAP…SPKV), 232 to 254 (GPGP…HLPK), 273 to 284 (LPGPGQYEIVNY), and 313 to 323 (LPGPASYKPEI). At Tyr78 the chain carries Phosphotyrosine.

It belongs to the STPG1 family.

The protein localises to the cytoplasm. The protein resides in the nucleus. May positively contribute to the induction of apoptosis triggered by O(6)-methylguanine. The polypeptide is O(6)-methylguanine-induced apoptosis 2 (Stpg1) (Rattus norvegicus (Rat)).